Reading from the N-terminus, the 305-residue chain is MTTIRVLGSAAGGGFPQWNCNCRNCDGVRRGTVRATPRTQSSIAVCGDGPEAILVNASPDILQQLRQTPALQPARAARDTAIAAVLLMDAQIDHVTGLLMLREHRRALPLYATASVLEDLAGAFPLTRILSHYCGLQCHALPCDGMAFSVPPLDGVALTAVPLQSKAPPYSPRRHAPQPGDNIGLRIEDRHSGRSAFYAPGLGQVDDHVFAQLRRADVVLVDGTFWRDDEMQALGFSTRSAADMGHLALSGPGGMIEVLDRLPARRKILIHINNTNPVLAEDSPERAELARHGIELAYDGMEIAL.

The protein belongs to the PqqB family.

The protein operates within cofactor biosynthesis; pyrroloquinoline quinone biosynthesis. In terms of biological role, may be involved in the transport of PQQ or its precursor to the periplasm. The chain is Coenzyme PQQ synthesis protein B from Cupriavidus taiwanensis (strain DSM 17343 / BCRC 17206 / CCUG 44338 / CIP 107171 / LMG 19424 / R1) (Ralstonia taiwanensis (strain LMG 19424)).